Reading from the N-terminus, the 282-residue chain is BTB/POZ domain-containing protein At3g56230 (282 aa).

Residues 40-50 (GSKEDRHDKSN) show a composition bias toward basic and acidic residues. The interval 40–66 (GSKEDRHDKSNHNSTINNGSSISSSPL) is disordered. A compositionally biased stretch (low complexity) spans 51–64 (HNSTINNGSSISSS). Residues 111-181 (ADILLKPGDD…LYTGTLASDK (71 aa)) form the BTB domain.

Its pathway is protein modification; protein ubiquitination. Its function is as follows. May act as a substrate-specific adapter of an E3 ubiquitin-protein ligase complex (CUL3-RBX1-BTB) which mediates the ubiquitination and subsequent proteasomal degradation of target proteins. This is BTB/POZ domain-containing protein At3g56230 from Arabidopsis thaliana (Mouse-ear cress).